The chain runs to 525 residues: uncharacterized protein (525 aa).

The zn(2)-C6 fungal-type DNA-binding region spans 21–48 (CLICRSMRKKCDEVHPQCGRCLKAGKQC).

The protein localises to the cytoplasm. It is found in the nucleus. This is an uncharacterized protein from Schizosaccharomyces pombe (strain 972 / ATCC 24843) (Fission yeast).